Reading from the N-terminus, the 147-residue chain is D-aminoacyl-tRNA deacylase (147 aa).

A Gly-cisPro motif, important for rejection of L-amino acids motif is present at residues 136 to 137 (GP).

Belongs to the DTD family. In terms of assembly, homodimer.

It localises to the cytoplasm. The enzyme catalyses glycyl-tRNA(Ala) + H2O = tRNA(Ala) + glycine + H(+). It catalyses the reaction a D-aminoacyl-tRNA + H2O = a tRNA + a D-alpha-amino acid + H(+). Its function is as follows. An aminoacyl-tRNA editing enzyme that deacylates mischarged D-aminoacyl-tRNAs. Also deacylates mischarged glycyl-tRNA(Ala), protecting cells against glycine mischarging by AlaRS. Acts via tRNA-based rather than protein-based catalysis; rejects L-amino acids rather than detecting D-amino acids in the active site. By recycling D-aminoacyl-tRNA to D-amino acids and free tRNA molecules, this enzyme counteracts the toxicity associated with the formation of D-aminoacyl-tRNA entities in vivo and helps enforce protein L-homochirality. The polypeptide is D-aminoacyl-tRNA deacylase (Nitratiruptor sp. (strain SB155-2)).